A 356-amino-acid chain; its full sequence is Histidinol-phosphate aminotransferase 2 (356 aa).

Residue lysine 214 is modified to N6-(pyridoxal phosphate)lysine.

The protein belongs to the class-II pyridoxal-phosphate-dependent aminotransferase family. Histidinol-phosphate aminotransferase subfamily. As to quaternary structure, homodimer. It depends on pyridoxal 5'-phosphate as a cofactor.

It carries out the reaction L-histidinol phosphate + 2-oxoglutarate = 3-(imidazol-4-yl)-2-oxopropyl phosphate + L-glutamate. Its pathway is amino-acid biosynthesis; L-histidine biosynthesis; L-histidine from 5-phospho-alpha-D-ribose 1-diphosphate: step 7/9. The protein is Histidinol-phosphate aminotransferase 2 of Dechloromonas aromatica (strain RCB).